The chain runs to 167 residues: Translationally-controlled tumor protein homolog (167 aa).

Residues 1-167 form the TCTP domain; it reads MIIFTDVISG…WKHGVSEDKI (167 aa).

Belongs to the TCTP family.

Its subcellular location is the cytoplasm. It is found in the cytoskeleton. Involved in protein synthesis. Involved in microtubule stabilization. The chain is Translationally-controlled tumor protein homolog from Debaryomyces hansenii (strain ATCC 36239 / CBS 767 / BCRC 21394 / JCM 1990 / NBRC 0083 / IGC 2968) (Yeast).